The chain runs to 1182 residues: MGQQVGRVGEAPGLQQPQPRGIRGSSAARPSGRRRDPAGRTTETGFNIFTQHDHFASCVEDGFEGDKTGGSSPEALHRPYGCDVEPQALNEAIRWSSKENLLGATESDPNLFVALYDFVASGDNTLSITKGEKLRVLGYNQNGEWSEVRSKNGQGWVPSNYITPVNSLEKHSWYHGPVSRSAAEYLLSSLINGSFLVRESESSPGQLSISLRYEGRVYHYRINTTADGKVYVTAESRFSTLAELVHHHSTVADGLVTTLHYPAPKCNKPTVYGVSPIHDKWEMERTDITMKHKLGGGQYGEVYVGVWKKYSLTVAVKTLKEDTMEVEEFLKEAAVMKEIKHPNLVQLLGVCTLEPPFYIVTEYMPYGNLLDYLRECNREEVTAVVLLYMATQISSAMEYLEKKNFIHRDLAARNCLVGENHVVKVADFGLSRLMTGDTYTAHAGAKFPIKWTAPESLAYNTFSIKSDVWAFGVLLWEIATYGMSPYPGIDLSQVYDLLEKGYRMEQPEGCPPKVYELMRACWKWSPADRPSFAETHQAFETMFHDSSISEEVAEELGRAASSSSVVPYLPRLPILPSKTRTLKKQVENKENIEGAQDATENSASSLAPGFIRGAQASSGSPALPRKQRDKSPSSLLEDAKETCFTRDRKGGFFSSFMKKRNAPTPPKRSSSFREMENQPHKKYELTGNFSSVASLQHADGFSFTPAQQEANLVPPKCYGGSFAQRNLCNDDGGGGGGSGTAGGGWSGITGFFTPRLIKKTLGLRAGKPTASDDTSKPFPRSNSTSSMSSGLPEQDRMAMTLPRNCQRSKLQLERTVSTSSQPEENVDRANDMLPKKSEESAAPSRERPKAKLLPRGATALPLRTPSGDLAITEKDPPGVGVAGVAAAPKGKEKNGGARLGMAGVPEDGEQPGWPSPAKAAPVLPTTHNHKVPVLISPTLKHTPADVQLIGTDSQGNKFKLLSEHQVTSSGDKDRPRRVKPKCAPPPPPVMRLLQHPSICSDPTEEPTALTAGQSTSETQEGGKKAALGAVPISGKAGRPVMPPPQVPLPTSSISPAKMANGTAGTKVALRKTKQAAEKISADKISKEALLECADLLSSALTEPVPNSQLVDTGHQLLDYCSGYVDCIPQTRNKFAFREAVSKLELSLQELQVSSAAAGVPGTNPVLNNLLSCVQEISDVVQR.

Disordered regions lie at residues 1–47 (MGQQ…TGFN) and 60–80 (EDGF…HRPY). Residue Gly-2 is the site of N-myristoyl glycine attachment. Residues 2 to 106 (GQQVGRVGEA…SKENLLGATE (105 aa)) form a CAP region. Low complexity predominate over residues 20 to 30 (RGIRGSSAARP). Position 97 is a phosphoserine (Ser-97). Positions 107-167 (SDPNLFVALY…PSNYITPVNS (61 aa)) constitute an SH3 domain. Tyr-116, Tyr-161, Tyr-174, Tyr-185, Tyr-218, and Tyr-231 each carry phosphotyrosine. The 91-residue stretch at 173-263 (WYHGPVSRSA…GLVTTLHYPA (91 aa)) folds into the SH2 domain. A Phosphotyrosine; by ABL1 and autocatalysis modification is found at Tyr-261. Tyr-272 carries the post-translational modification Phosphotyrosine; by autocatalysis. Ser-275 carries the phosphoserine modification. Residues 288-539 (ITMKHKLGGG…PSFAETHQAF (252 aa)) form the Protein kinase domain. 294 to 302 (LGGGQYGEV) serves as a coordination point for ATP. 2 positions are modified to phosphotyrosine: Tyr-299 and Tyr-303. ATP contacts are provided by residues Lys-317 and 362-368 (EYMPYGN). The active-site Proton acceptor is Asp-409. The short motif at 427–451 (DFGLSRLMTGDTYTAHAGAKFPIKW) is the Kinase activation loop element. Tyr-439 is modified (phosphotyrosine; by autocatalysis and SRC-type Tyr-kinases). Tyr-459 carries the post-translational modification Phosphotyrosine. Tyr-568 is modified (phosphotyrosine; by autocatalysis). The disordered stretch occupies residues 611–641 (IRGAQASSGSPALPRKQRDKSPSSLLEDAKE). A phosphoserine mark is found at Ser-620, Ser-631, and Ser-633. A Phosphotyrosine modification is found at Asp-647. The segment at 654–674 (SSFMKKRNAPTPPKRSSSFRE) is disordered. Ser-655 carries the post-translational modification Phosphoserine. A Nuclear localization signal motif is present at residues 658 to 660 (KKR). A phosphotyrosine mark is found at Ala-662 and Arg-668. Phosphoserine occurs at positions 669, 670, and 671. Tyr-683 and Tyr-718 each carry phosphotyrosine. Tyr-683 carries the post-translational modification Phosphotyrosine; by autocatalysis. The F-actin-binding stretch occupies residues 694 to 930 (SLQHADGFSF…PVLPTTHNHK (237 aa)). Positions 763 to 794 (LRAGKPTASDDTSKPFPRSNSTSSMSSGLPEQ) are disordered. Lys-776 carries the post-translational modification N6-acetyllysine. The span at 780-791 (RSNSTSSMSSGL) shows a compositional bias: polar residues. Phosphoserine is present on Ser-783. Thr-800 carries the phosphothreonine modification. A compositionally biased stretch (polar residues) spans 807 to 823 (RSKLQLERTVSTSSQPE). Residues 807 to 851 (RSKLQLERTVSTSSQPEENVDRANDMLPKKSEESAAPSRERPKAK) form a disordered region. A phosphoserine mark is found at Ser-817 and Ser-820. Over residues 825-849 (NVDRANDMLPKKSEESAAPSRERPK) the composition is skewed to basic and acidic residues. Ser-915 and Ser-936 each carry phosphoserine. The segment at 964 to 1024 (HQVTSSGDKD…TSETQEGGKK (61 aa)) is disordered. Residues 1010 to 1019 (TAGQSTSETQ) show a composition bias toward polar residues. The segment at 1020 to 1182 (EGGKKAALGA…VQEISDVVQR (163 aa)) is F-actin-binding.

This sequence belongs to the protein kinase superfamily. Tyr protein kinase family. ABL subfamily. Interacts with PSMA7. Interacts with CTTN. Found in a complex with ABL1, ABL2, CRK and UNC119; leading to the inhibition of CRK phosphorylation by ABL kinases. Requires Mg(2+) as cofactor. Mn(2+) is required as a cofactor. Post-translationally, phosphorylated at Tyr-261 by ABL1 in response to oxidative stress. Phosphorylated by PDGFRB. Polyubiquitinated. Polyubiquitination of ABL2 leads to degradation. In terms of tissue distribution, widely expressed.

It is found in the cytoplasm. The protein resides in the cytoskeleton. It catalyses the reaction L-tyrosyl-[protein] + ATP = O-phospho-L-tyrosyl-[protein] + ADP + H(+). Its activity is regulated as follows. Stabilized in the inactive form by an association between the SH3 domain and the SH2-TK linker region, interactions of the N-terminal cap, and contributions from an N-terminal myristoyl group and phospholipids. Activated by autophosphorylation as well as by SRC-family kinase-mediated phosphorylation. Activated by RIN1 binding to the SH2 and SH3 domains. Inhibited by imatinib mesylate (Gleevec) which is used for the treatment of chronic myeloid leukemia (CML). Phosphatidylinositol 4,5-bisphosphate (PIP2), a highly abundant phosphoinositide known to regulate cytoskeletal and membrane proteins, inhibits the tyrosine kinase activity. Its function is as follows. Non-receptor tyrosine-protein kinase that plays an ABL1-overlapping role in key processes linked to cell growth and survival such as cytoskeleton remodeling in response to extracellular stimuli, cell motility and adhesion and receptor endocytosis. Coordinates actin remodeling through tyrosine phosphorylation of proteins controlling cytoskeleton dynamics like MYH10 (involved in movement); CTTN (involved in signaling); or TUBA1 and TUBB (microtubule subunits). Binds directly F-actin and regulates actin cytoskeletal structure through its F-actin-bundling activity. Involved in the regulation of cell adhesion and motility through phosphorylation of key regulators of these processes such as CRK, CRKL, DOK1 or ARHGAP35. Adhesion-dependent phosphorylation of ARHGAP35 promotes its association with RASA1, resulting in recruitment of ARHGAP35 to the cell periphery where it inhibits RHO. Phosphorylates multiple receptor tyrosine kinases like PDGFRB and other substrates which are involved in endocytosis regulation such as RIN1. In brain, may regulate neurotransmission by phosphorylating proteins at the synapse. ABL2 also acts as a regulator of multiple pathological signaling cascades during infection. Pathogens can highjack ABL2 kinase signaling to reorganize the host actin cytoskeleton for multiple purposes, like facilitating intracellular movement and host cell exit. Finally, functions as its own regulator through autocatalytic activity as well as through phosphorylation of its inhibitor, ABI1. Positively regulates chemokine-mediated T-cell migration, polarization, and homing to lymph nodes and immune-challenged tissues, potentially via activation of NEDD9/HEF1 and RAP1. This chain is Tyrosine-protein kinase ABL2 (ABL2), found in Homo sapiens (Human).